The primary structure comprises 451 residues: Methylenetetrahydrofolate--tRNA-(uracil-5-)-methyltransferase TrmFO (451 aa).

An FAD-binding site is contributed by 10–15; that stretch reads GGGLAG.

Belongs to the MnmG family. TrmFO subfamily. The cofactor is FAD.

It localises to the cytoplasm. The catalysed reaction is uridine(54) in tRNA + (6R)-5,10-methylene-5,6,7,8-tetrahydrofolate + NADH + H(+) = 5-methyluridine(54) in tRNA + (6S)-5,6,7,8-tetrahydrofolate + NAD(+). It carries out the reaction uridine(54) in tRNA + (6R)-5,10-methylene-5,6,7,8-tetrahydrofolate + NADPH + H(+) = 5-methyluridine(54) in tRNA + (6S)-5,6,7,8-tetrahydrofolate + NADP(+). Catalyzes the folate-dependent formation of 5-methyl-uridine at position 54 (M-5-U54) in all tRNAs. In Anaeromyxobacter sp. (strain Fw109-5), this protein is Methylenetetrahydrofolate--tRNA-(uracil-5-)-methyltransferase TrmFO.